We begin with the raw amino-acid sequence, 218 residues long: Octanoyltransferase (218 aa).

The region spanning 32–214 (ALTPDEIWLV…HFTQLLGYND (183 aa)) is the BPL/LPL catalytic domain. Residues 71–78 (RGGQITYH), 143–145 (SLG), and 156–158 (GLA) each bind substrate. C174 acts as the Acyl-thioester intermediate in catalysis.

Belongs to the LipB family.

Its subcellular location is the cytoplasm. It carries out the reaction octanoyl-[ACP] + L-lysyl-[protein] = N(6)-octanoyl-L-lysyl-[protein] + holo-[ACP] + H(+). It functions in the pathway protein modification; protein lipoylation via endogenous pathway; protein N(6)-(lipoyl)lysine from octanoyl-[acyl-carrier-protein]: step 1/2. In terms of biological role, catalyzes the transfer of endogenously produced octanoic acid from octanoyl-acyl-carrier-protein onto the lipoyl domains of lipoate-dependent enzymes. Lipoyl-ACP can also act as a substrate although octanoyl-ACP is likely to be the physiological substrate. The polypeptide is Octanoyltransferase (Histophilus somni (strain 129Pt) (Haemophilus somnus)).